The sequence spans 478 residues: Microfibrillar-associated protein 1 (478 aa).

Low complexity predominate over residues 1-20; it reads MSAATAAAAASGIQSTAGAI. Disordered regions lie at residues 1 to 276 and 456 to 478; these read MSAA…RRAT and NEHA…KKME. Acidic residues predominate over residues 53–62; sequence SSEESDDDDF. The span at 107 to 128 shows a compositional bias: basic and acidic residues; sequence DDPRLRRLRQRPVDMEDMERER. Residues 140 to 153 show a composition bias toward acidic residues; the sequence is IMESDSEDEEEDEG. The segment covering 160-170 has biased composition (polar residues); sequence RGTNKITLASE. The span at 171 to 181 shows a compositional bias: acidic residues; that stretch reads SDTDAELSDTE. A compositionally biased stretch (basic and acidic residues) spans 197-212; the sequence is QREEEVLQKEDEKQSE. The span at 214 to 231 shows a compositional bias: acidic residues; that stretch reads SESESSEYEEETESEEDN. An interaction with Prp38 region spans residues 229-478; sequence EDNEPRLKPL…PTGSKRKKME (250 aa). Basic and acidic residues predominate over residues 245–268; that stretch reads RATIQEKEREAQKQKQLEAEAKRA.

The protein belongs to the MFAP1 family. Component of the spliceosome B complex. Interacts (via C-terminus) with Prp38.

It is found in the nucleus. In terms of biological role, required for pre-mRNA splicing. The chain is Microfibrillar-associated protein 1 from Drosophila melanogaster (Fruit fly).